The primary structure comprises 291 residues: uncharacterized protein (291 aa).

It belongs to the pseudouridine synthase RluA family.

The catalysed reaction is a uridine in RNA = a pseudouridine in RNA. This is an uncharacterized protein from Synechocystis sp. (strain ATCC 27184 / PCC 6803 / Kazusa).